The primary structure comprises 1098 residues: Restriction of telomere capping protein 1 (1098 aa).

A disordered region spans residues 26 to 57 (NSSTPQSHEISPSSSLGSSRSNKQTNQYSSQE). A compositionally biased stretch (low complexity) spans 32 to 46 (SHEISPSSSLGSSRS). Residues 47–57 (NKQTNQYSSQE) show a composition bias toward polar residues. WD repeat units follow at residues 131–170 (ATNKLINVNTIKTYADTIAAGLSNGVVLIYRVSPNGQSKV), 176–215 (DHSRTINSLDFIDSENQLLSGSQDGTIKLWDLRSSSTKPV), 222–266 (LHSD…GGKV), 275–314 (LHTGPVLSLHIHPEKEYVVTGGRDKRISVFNYGDGQSRNT), 367–417 (DPTI…SFNS), and 432–473 (IEDL…TYED). The segment covering 535 to 562 (QNEPVTPSSSSSIPNMHLSSSRPKLTRN) has biased composition (polar residues). The interval 535-597 (QNEPVTPSSS…YSSPQYKRNQ (63 aa)) is disordered. The segment covering 563 to 593 (TSQTTQDSSSSQLSSVIPPPSSSQTYSSPQY) has biased composition (low complexity). A WD 7 repeat occupies 635 to 673 (PDGFTLVDVCLINASVAASVNNNRTSQVWKLLAVSIQEE). A compositionally biased stretch (polar residues) spans 731–742 (KSTSTSGSQFGK). Positions 731 to 843 (KSTSTSGSQF…LKSSPPSVGV (113 aa)) are disordered. Residues 768–778 (SRNSSFSTTSF) show a composition bias toward low complexity. Residues 779 to 804 (RLKEQERREHELRNTQNFRDENEKVS) are compositionally biased toward basic and acidic residues. Over residues 806 to 816 (HSKSAPISISS) the composition is skewed to polar residues. The WD 8 repeat unit spans residues 891-934 (DVSNGVTMMGTSGLSLALKRNKTNEEGCEFVKVWKFKSLLRKSL). The segment at 1050 to 1093 (CVYCNEPCKGLAVTVGLKCGHQGHFGCLKEWFIEDQNTECPGGC) adopts an RING-type; degenerate zinc-finger fold.

Belongs to the WD repeat RTC1 family.

It localises to the vacuole. In terms of biological role, may be involved in a process influencing telomere capping. This chain is Restriction of telomere capping protein 1 (RTC1), found in Candida dubliniensis (strain CD36 / ATCC MYA-646 / CBS 7987 / NCPF 3949 / NRRL Y-17841) (Yeast).